The chain runs to 227 residues: Cytochrome c oxidase subunit 2 (227 aa).

At 1-14 (MAYPFQLGLQDATS) the chain is on the mitochondrial intermembrane side. A helical membrane pass occupies residues 15–45 (PIMEELTNFHDHTLMIVFLISSLVLYIISLM). Residues 46–59 (LTTKLTHTSTMDAQ) lie on the Mitochondrial matrix side of the membrane. Residues 60-87 (EVETIWTILPAAILVLIALPSLRILYMM) traverse the membrane as a helical segment. Residues 88 to 227 (DEINNPVLTV…HFENWSASMV (140 aa)) lie on the Mitochondrial intermembrane side of the membrane. The Cu cation site is built by His161, Cys196, Glu198, Cys200, His204, and Met207. A Mg(2+)-binding site is contributed by Glu198.

The protein belongs to the cytochrome c oxidase subunit 2 family. In terms of assembly, component of the cytochrome c oxidase (complex IV, CIV), a multisubunit enzyme composed of 14 subunits. The complex is composed of a catalytic core of 3 subunits MT-CO1, MT-CO2 and MT-CO3, encoded in the mitochondrial DNA, and 11 supernumerary subunits COX4I, COX5A, COX5B, COX6A, COX6B, COX6C, COX7A, COX7B, COX7C, COX8 and NDUFA4, which are encoded in the nuclear genome. The complex exists as a monomer or a dimer and forms supercomplexes (SCs) in the inner mitochondrial membrane with NADH-ubiquinone oxidoreductase (complex I, CI) and ubiquinol-cytochrome c oxidoreductase (cytochrome b-c1 complex, complex III, CIII), resulting in different assemblies (supercomplex SCI(1)III(2)IV(1) and megacomplex MCI(2)III(2)IV(2)). Found in a complex with TMEM177, COA6, COX18, COX20, SCO1 and SCO2. Interacts with TMEM177 in a COX20-dependent manner. Interacts with COX20. Interacts with COX16. Requires Cu cation as cofactor.

The protein resides in the mitochondrion inner membrane. It catalyses the reaction 4 Fe(II)-[cytochrome c] + O2 + 8 H(+)(in) = 4 Fe(III)-[cytochrome c] + 2 H2O + 4 H(+)(out). In terms of biological role, component of the cytochrome c oxidase, the last enzyme in the mitochondrial electron transport chain which drives oxidative phosphorylation. The respiratory chain contains 3 multisubunit complexes succinate dehydrogenase (complex II, CII), ubiquinol-cytochrome c oxidoreductase (cytochrome b-c1 complex, complex III, CIII) and cytochrome c oxidase (complex IV, CIV), that cooperate to transfer electrons derived from NADH and succinate to molecular oxygen, creating an electrochemical gradient over the inner membrane that drives transmembrane transport and the ATP synthase. Cytochrome c oxidase is the component of the respiratory chain that catalyzes the reduction of oxygen to water. Electrons originating from reduced cytochrome c in the intermembrane space (IMS) are transferred via the dinuclear copper A center (CU(A)) of subunit 2 and heme A of subunit 1 to the active site in subunit 1, a binuclear center (BNC) formed by heme A3 and copper B (CU(B)). The BNC reduces molecular oxygen to 2 water molecules using 4 electrons from cytochrome c in the IMS and 4 protons from the mitochondrial matrix. The polypeptide is Cytochrome c oxidase subunit 2 (MT-CO2) (Uromys caudimaculatus (Giant white-tailed rat)).